The sequence spans 311 residues: Olfactory receptor 5M8 (311 aa).

Over 1–24 (MRRNCTLVTEFILLGLTSRRELQI) the chain is Extracellular. Asn-4 carries N-linked (GlcNAc...) asparagine glycosylation. Residues 25–45 (LLFTLFLAIYMVTVAGNLGMI) form a helical membrane-spanning segment. Topologically, residues 46 to 53 (VLIQANAW) are cytoplasmic. The chain crosses the membrane as a helical span at residues 54-74 (LHMPMYFFLSHLSFVDLCFSS). The Extracellular segment spans residues 75-98 (NVTPKMLEIFLSEKKSISYPACLV). A disulfide bridge links Cys-96 with Cys-188. Residues 99-119 (QCYLFIALVHVEIYILAVMAF) form a helical membrane-spanning segment. Over 120 to 138 (DRYMAICNPLLYGSRMSKS) the chain is Cytoplasmic. Residues 139-159 (VCSFLITVPYVYGALTGLMET) traverse the membrane as a helical segment. Residues 160–195 (MWTYNLAFCGPNEINHFYCADPPLIKLACSDTYNKE) lie on the Extracellular side of the membrane. The chain crosses the membrane as a helical span at residues 196–216 (LSMFIVAGWNLSFSLFIICIS). The Cytoplasmic portion of the chain corresponds to 217-236 (YLYIFPAILKIRSTEGRQKA). Residues 237–257 (FSTCGSHLTAVTIFYATLFFM) form a helical membrane-spanning segment. Residues 258–270 (YLRPPSKESVEQG) are Extracellular-facing. The helical transmembrane segment at 271-291 (KMVAVFYTTVIPMLNLIIYSL) threads the bilayer. Over 292-311 (RNKNVKEALIKELSMKIYFS) the chain is Cytoplasmic.

This sequence belongs to the G-protein coupled receptor 1 family.

It localises to the cell membrane. Functionally, odorant receptor. The protein is Olfactory receptor 5M8 (OR5M8) of Homo sapiens (Human).